The following is a 631-amino-acid chain: Chaperone protein HtpG (631 aa).

Residues 1–338 (MILKEQETLG…CNDLPLNISR (338 aa)) are a; substrate-binding. Residues 339 to 554 (EMLQHNRITQ…SNNMTTHMAK (216 aa)) are b. Positions 555 to 631 (LIVASGQNKP…KLLNHDTIVN (77 aa)) are c.

This sequence belongs to the heat shock protein 90 family. As to quaternary structure, homodimer.

Its subcellular location is the cytoplasm. Its function is as follows. Molecular chaperone. Has ATPase activity. The protein is Chaperone protein HtpG of Baumannia cicadellinicola subsp. Homalodisca coagulata.